A 461-amino-acid polypeptide reads, in one-letter code: Phytase A (461 aa).

Cysteines 22 and 31 form a disulfide. 1D-myo-inositol hexakisphosphate is bound by residues Gln41, Tyr42, Arg71, His72, Arg75, and Thr78. Disulfide bonds link Cys61-Cys405, Cys205-Cys456, Cys254-Cys272, and Cys427-Cys435. His72 serves as the catalytic Nucleophile. N-linked (GlcNAc...) asparagine glycans are attached at residues Asn95 and Asn110. Residue Arg155 coordinates 1D-myo-inositol hexakisphosphate. An N-linked (GlcNAc...) asparagine glycan is attached at Asn197. Lys291 serves as a coordination point for 1D-myo-inositol hexakisphosphate. 2 N-linked (GlcNAc...) asparagine glycosylation sites follow: Asn329 and Asn343. 1D-myo-inositol hexakisphosphate-binding residues include His352 and Asp353. Asn367 is a glycosylation site (N-linked (GlcNAc...) asparagine).

Belongs to the histidine acid phosphatase family. Monomer. Post-translationally, glycosylated.

It localises to the secreted. The catalysed reaction is 1D-myo-inositol hexakisphosphate + H2O = 1D-myo-inositol 1,2,4,5,6-pentakisphosphate + phosphate. It catalyses the reaction 1D-myo-inositol 1,2,4,5,6-pentakisphosphate + H2O = 1D-myo-inositol 1,2,5,6-tetrakisphosphate + phosphate. The enzyme catalyses 1D-myo-inositol 1,2,5,6-tetrakisphosphate + H2O = 1D-myo-inositol 1,2,6-trisphosphate + phosphate. It carries out the reaction 1D-myo-inositol 1,2,6-trisphosphate + H2O = 1D-myo-inositol 1,2-bisphosphate + phosphate. The catalysed reaction is 1D-myo-inositol 1,2-bisphosphate + H2O = 1D-myo-inositol 2-phosphate + phosphate. In terms of biological role, catalyzes the phosphate monoester hydrolysis of phytic acid (myo-inositol hexakisphosphate), which results in the stepwise formation of myo-inositol pentakis-, tetrakis-, tris-, bis-, and monophosphates, as well as the liberation of inorganic phosphate. Myo-inositol 2-monophosphate is the end product. In Penicillium oxalicum, this protein is Phytase A.